Consider the following 316-residue polypeptide: Taste receptor type 2 member 3 (316 aa).

Residues 1-7 are Extracellular-facing; sequence MLGFTEG. A helical membrane pass occupies residues 8-28; sequence IFLVLTVTEFILGNLVNGFIV. Residues 29–50 lie on the Cytoplasmic side of the membrane; sequence SVNGSHWFKSKKISLSDFIITS. A helical membrane pass occupies residues 51-71; sequence LALFRIFLLWIIFTDSLIIVF. Residues 72–86 are Extracellular-facing; that stretch reads SYHTHDSGIRMQLID. A helical transmembrane segment spans residues 87–107; it reads VFWTFTNHFSIWLISCLSVFY. The Cytoplasmic portion of the chain corresponds to 108-128; the sequence is CLKIATFSHPSFLWLKWRASR. The helical transmembrane segment at 129–149 threads the bilayer; that stretch reads VVVGMLWGALVLSCVCTMSLM. The Extracellular portion of the chain corresponds to 150–186; sequence NEFKIYSALTGSRDTQNMTEYIRLKRHEYNLMHVLGN. N-linked (GlcNAc...) asparagine glycosylation occurs at N166. Residues 187–207 form a helical membrane-spanning segment; sequence LWKIPSLIVSLIAYFLLLLSL. Residues 208–234 are Cytoplasmic-facing; sequence GKHTQQMQKYSVGSRDQSAEAHRRAMR. The chain crosses the membrane as a helical span at residues 235-255; sequence IILSFLLFFLFYFLSFVILSS. Topologically, residues 256–266 are extracellular; the sequence is SRFLPETKIAR. Residues 267-287 form a helical membrane-spanning segment; that stretch reads IIGVVITMSYLVGDSLILILG. Topologically, residues 288–316 are cytoplasmic; sequence NNKLKQTFVAILPCECGHPKPGSKRFFAS.

This sequence belongs to the G-protein coupled receptor T2R family.

The protein resides in the membrane. Its function is as follows. Gustducin-coupled receptor implicated in the perception of bitter compounds in the oral cavity and the gastrointestinal tract. Signals through PLCB2 and the calcium-regulated cation channel TRPM5. This is Taste receptor type 2 member 3 from Rattus norvegicus (Rat).